Consider the following 85-residue polypeptide: Neutrophil elastase 2A (85 aa).

In terms of domain architecture, Peptidase S1 spans 1-85 (IVGGRAAEPH…VAQGVFSFVR (85 aa)). Ser-67 serves as the catalytic Charge relay system.

Belongs to the peptidase S1 family. Elastase subfamily.

Functionally, may be involved in the degradation of connective tissue in chronic lung disease. This is Neutrophil elastase 2A from Equus caballus (Horse).